The sequence spans 333 residues: Flap endonuclease 1 (333 aa).

The N-domain stretch occupies residues 1-99; it reads MGVALREVLT…ETIESRREVR (99 aa). Mg(2+) is bound by residues Asp-28, Asp-81, Glu-153, Glu-155, Asp-174, Asp-176, and Asp-235. The segment at 117–256 is I-domain; that stretch reads EAYKQARASS…TALKIVKKDG (140 aa). The segment at 325–333 is interaction with PCNA; sequence GQKTLDRWF.

This sequence belongs to the XPG/RAD2 endonuclease family. FEN1 subfamily. As to quaternary structure, interacts with PCNA. PCNA stimulates the nuclease activity without altering cleavage specificity. The cofactor is Mg(2+).

Its function is as follows. Structure-specific nuclease with 5'-flap endonuclease and 5'-3' exonuclease activities involved in DNA replication and repair. During DNA replication, cleaves the 5'-overhanging flap structure that is generated by displacement synthesis when DNA polymerase encounters the 5'-end of a downstream Okazaki fragment. Binds the unpaired 3'-DNA end and kinks the DNA to facilitate 5' cleavage specificity. Cleaves one nucleotide into the double-stranded DNA from the junction in flap DNA, leaving a nick for ligation. Also involved in the base excision repair (BER) pathway. Acts as a genome stabilization factor that prevents flaps from equilibrating into structures that lead to duplications and deletions. Also possesses 5'-3' exonuclease activity on nicked or gapped double-stranded DNA. This chain is Flap endonuclease 1, found in Methanosphaerula palustris (strain ATCC BAA-1556 / DSM 19958 / E1-9c).